Consider the following 194-residue polypeptide: Glycerol-3-phosphate acyltransferase (194 aa).

5 consecutive transmembrane segments (helical) span residues 7 to 27, 59 to 79, 86 to 106, 116 to 136, and 157 to 177; these read LLMA…YWVC, LTLF…AMLG, GVTA…HFKG, AGLA…AAVV, and AWRL…FILI.

The protein belongs to the PlsY family. As to quaternary structure, probably interacts with PlsX.

The protein localises to the cell inner membrane. It carries out the reaction an acyl phosphate + sn-glycerol 3-phosphate = a 1-acyl-sn-glycero-3-phosphate + phosphate. Its pathway is lipid metabolism; phospholipid metabolism. Catalyzes the transfer of an acyl group from acyl-phosphate (acyl-PO(4)) to glycerol-3-phosphate (G3P) to form lysophosphatidic acid (LPA). This enzyme utilizes acyl-phosphate as fatty acyl donor, but not acyl-CoA or acyl-ACP. The sequence is that of Glycerol-3-phosphate acyltransferase from Hahella chejuensis (strain KCTC 2396).